Consider the following 107-residue polypeptide: Class I hydrophobin hgfI (107 aa).

The N-terminal stretch at methionine 1–arginine 24 is a signal peptide. Disulfide bonds link cysteine 27/cysteine 88, cysteine 34/cysteine 82, cysteine 35/cysteine 68, and cysteine 89/cysteine 102.

This sequence belongs to the fungal hydrophobin family. In terms of assembly, self-assembles to form functional amyloid fibrils called rodlets with a length range 100-150 nm. Self-assembly into fibrillar rodlets occurs spontaneously at hydrophobic:hydrophilic interfaces and the rodlets further associate laterally to form amphipathic monolayers. As to expression, only weekly expressed in hyphae cultured in liquid medium.

It localises to the secreted. It is found in the cell wall. In terms of biological role, aerial growth, conidiation, and dispersal of filamentous fungi in the environment rely upon a capability of their secreting small amphipathic proteins called hydrophobins (HPBs) with low sequence identity. Class I can self-assemble into an outermost layer of rodlet bundles on aerial cell surfaces, conferring cellular hydrophobicity that supports fungal growth, development and dispersal; whereas Class II form highly ordered films at water-air interfaces through intermolecular interactions but contribute nothing to the rodlet structure. HgfI is a class I hydrophobin that is involved in cell surface hydrophobicity and lowers the surface tension of water and change the nature of the surfaces to which it adsorbs. This is Class I hydrophobin hgfI from Grifola frondosa (Maitake).